The primary structure comprises 170 residues: Extracellular globin-3 (170 aa).

Residues 1–17 (MLRQLLVLVGLAVVCLA) form the signal peptide. Residues 23 to 169 (CCSEEDHRIV…ILTKISSRLN (147 aa)) enclose the Globin domain. A disulfide bridge links Cys24 with Cys156. His119 serves as a coordination point for heme b.

Belongs to the globin family. In terms of assembly, the extracellular hemoglobin of the earthworm consists of 12 subunits that have a hexagonal bilayer structure with a molecular weight near 3.8 million. Each one-twelfth subunit is composed primarily of disulfide linked trimers (chains A, B, and C) and monomers (chain D).

It localises to the secreted. This chain is Extracellular globin-3, found in Lumbricus terrestris (Common earthworm).